The following is a 1016-amino-acid chain: Kinesin-like protein KIN-14K (1016 aa).

In terms of domain architecture, Calponin-homology (CH) spans 14-121; it reads ADRRAEVIEW…CLLVLRESVS (108 aa). The disordered stretch occupies residues 123–176; that stretch reads GLRDGTSKAPLRKKWRVPETGEPLVPGVAQGKTSPGEDKRNGLPDPKSQQKTPI. Residues 288–354 adopt a coiled-coil conformation; it reads VNGTNEENQM…EVMTSMHEQQ (67 aa). The 328-residue stretch at 481–808 folds into the Kinesin motor domain; that stretch reads NIRVYCRVRP…LKFAERVSGV (328 aa). ATP is bound at residue 565 to 572; it reads GQTGSGKT. A coiled-coil region spans residues 820–852; that stretch reads KDIKELLEQVASLKDTIVRKDTEIEQLQLMKDK. Polar residues-rich tracts occupy residues 884–893 and 990–1004; these read NQQSQLSDPQ and KTPNQTRVQSSQLIG. Disordered stretches follow at residues 884–912 and 971–1016; these read NQQSQLSDPQSYAEVNRDGGPTSYTDITP and LTKN…RWQK.

The protein belongs to the TRAFAC class myosin-kinesin ATPase superfamily. Kinesin family. KIN-14 subfamily.

The chain is Kinesin-like protein KIN-14K from Oryza sativa subsp. japonica (Rice).